The sequence spans 65 residues: DNA gyrase inhibitor YacG (65 aa).

The Zn(2+) site is built by Cys8, Cys11, Cys27, and Cys31. Positions 43 to 65 are disordered; that stretch reads SYRIPDTGKDSEKQENDPSGSEK. Positions 48–65 are enriched in basic and acidic residues; the sequence is DTGKDSEKQENDPSGSEK.

The protein belongs to the DNA gyrase inhibitor YacG family. In terms of assembly, interacts with GyrB. Zn(2+) serves as cofactor.

Functionally, inhibits all the catalytic activities of DNA gyrase by preventing its interaction with DNA. Acts by binding directly to the C-terminal domain of GyrB, which probably disrupts DNA binding by the gyrase. This chain is DNA gyrase inhibitor YacG, found in Nitrosospira multiformis (strain ATCC 25196 / NCIMB 11849 / C 71).